The chain runs to 169 residues: Endoribonuclease YbeY (169 aa).

Zn(2+) contacts are provided by His126, His130, and His136.

The protein belongs to the endoribonuclease YbeY family. Requires Zn(2+) as cofactor.

Its subcellular location is the cytoplasm. Single strand-specific metallo-endoribonuclease involved in late-stage 70S ribosome quality control and in maturation of the 3' terminus of the 16S rRNA. This Bradyrhizobium sp. (strain BTAi1 / ATCC BAA-1182) protein is Endoribonuclease YbeY.